The following is an 882-amino-acid chain: Alanine--tRNA ligase (882 aa).

Residues H567, H571, C669, and H673 each coordinate Zn(2+).

It belongs to the class-II aminoacyl-tRNA synthetase family. It depends on Zn(2+) as a cofactor.

It localises to the cytoplasm. The enzyme catalyses tRNA(Ala) + L-alanine + ATP = L-alanyl-tRNA(Ala) + AMP + diphosphate. Its function is as follows. Catalyzes the attachment of alanine to tRNA(Ala) in a two-step reaction: alanine is first activated by ATP to form Ala-AMP and then transferred to the acceptor end of tRNA(Ala). Also edits incorrectly charged Ser-tRNA(Ala) and Gly-tRNA(Ala) via its editing domain. The sequence is that of Alanine--tRNA ligase from Thermosynechococcus vestitus (strain NIES-2133 / IAM M-273 / BP-1).